The following is a 401-amino-acid chain: Nodal homolog 3-A (401 aa).

Residues 1–18 (MAFLNLFFCLVFISPLMA) form the signal peptide. The propeptide occupies 19-274 (MPPVLQGRKS…KVNGFRRLRR (256 aa)). Residues Asn168, Asn337, Asn341, and Asn344 are each glycosylated (N-linked (GlcNAc...) asparagine). Cystine bridges form between Cys299–Cys365 and Cys328–Cys396.

Belongs to the TGF-beta family. Monomer. The propeptide region interacts with bmp4 in a non-covalent manner. Expressed in the epithelial layer of the Spemann organizer during gastrulation.

The protein resides in the secreted. Functionally, exhibits mesoderm-dorsalizing activity and neural-inducing activity, but lacks mesoderm-inducing activity. Regulates the expression of specific mesodermal and neural genes. Induces convergent extension movements at the embryonic midline by activating the fgf signaling pathway to induce t/bra expression in the organizer region. Acts with wnt11 to induce Spemann organizer cells and induce axis formation. The unprocessed protein antagonizes bmp-signaling. The protein is Nodal homolog 3-A (nodal3-a) of Xenopus laevis (African clawed frog).